Reading from the N-terminus, the 411-residue chain is LIM domain-binding protein 1 (411 aa).

Disordered regions lie at residues 284–330 and 367–411; these read PPAE…TFAL and DAAN…QASQ. Residues 302 to 318 show a composition bias toward low complexity; sequence SGGSTMSSGGGNTNNSN. One can recognise an LIM interaction domain (LID) domain in the interval 336 to 375; that stretch reads DVMVVGEPTLMGGEFGDEDERLITRLENTQFDAANGIDDE.

This sequence belongs to the LDB family. In terms of assembly, forms homodimers and heterodimers. As to expression, first expressed at stages 15-16 in presumptive limb mesoderm. As limb outgrowth proceeds, expressed in the entire limb bud, concentrating in the distal mesoderm throughout limb development. Both hindlimbs and forelimbs exhibit similar expression patterns.

The protein resides in the nucleus. Its function is as follows. Binds to the LIM domain of a wide variety of LIM domain-containing transcription factors. The polypeptide is LIM domain-binding protein 1 (Gallus gallus (Chicken)).